The primary structure comprises 223 residues: Ion-translocating oxidoreductase complex subunit E (223 aa).

A run of 7 helical transmembrane segments spans residues Ser17–Ala37, Ile38–Leu58, Ile68–Ala88, Phe91–Val111, Val124–Ile144, Phe156–Ile176, and Thr181–Phe201.

The protein belongs to the NqrDE/RnfAE family. The complex is composed of six subunits: RnfA, RnfB, RnfC, RnfD, RnfE and RnfG.

It is found in the cell inner membrane. Part of a membrane-bound complex that couples electron transfer with translocation of ions across the membrane. This is Ion-translocating oxidoreductase complex subunit E from Buchnera aphidicola subsp. Schizaphis graminum (strain Sg).